The following is a 225-amino-acid chain: PKHD-type hydroxylase YbiX (225 aa).

A Fe2OG dioxygenase domain is found at Thr78–Ser177. His96, Asp98, and His158 together coordinate Fe cation. Position 168 (Arg168) interacts with 2-oxoglutarate.

Fe(2+) serves as cofactor. L-ascorbate is required as a cofactor.

This chain is PKHD-type hydroxylase YbiX, found in Escherichia fergusonii (strain ATCC 35469 / DSM 13698 / CCUG 18766 / IAM 14443 / JCM 21226 / LMG 7866 / NBRC 102419 / NCTC 12128 / CDC 0568-73).